The primary structure comprises 212 residues: Peptide methionine sulfoxide reductase MsrA (212 aa).

The active site involves C52.

This sequence belongs to the MsrA Met sulfoxide reductase family.

It catalyses the reaction L-methionyl-[protein] + [thioredoxin]-disulfide + H2O = L-methionyl-(S)-S-oxide-[protein] + [thioredoxin]-dithiol. It carries out the reaction [thioredoxin]-disulfide + L-methionine + H2O = L-methionine (S)-S-oxide + [thioredoxin]-dithiol. In terms of biological role, has an important function as a repair enzyme for proteins that have been inactivated by oxidation. Catalyzes the reversible oxidation-reduction of methionine sulfoxide in proteins to methionine. The sequence is that of Peptide methionine sulfoxide reductase MsrA from Shigella dysenteriae serotype 1 (strain Sd197).